The primary structure comprises 346 residues: Peroxidase 9 (346 aa).

A signal peptide spans methionine 1 to alanine 23. 4 disulfide bridges follow: cysteine 54/cysteine 134, cysteine 87/cysteine 92, cysteine 140/cysteine 342, and cysteine 219/cysteine 251. Histidine 85 serves as the catalytic Proton acceptor. Aspartate 86, valine 89, glycine 91, aspartate 93, and serine 95 together coordinate Ca(2+). A substrate-binding site is contributed by proline 182. A glycan (N-linked (GlcNAc...) asparagine) is linked at asparagine 185. Histidine 212 serves as a coordination point for heme b. Threonine 213 is a binding site for Ca(2+). Residues aspartate 264, serine 267, and aspartate 272 each coordinate Ca(2+).

This sequence belongs to the peroxidase family. Classical plant (class III) peroxidase subfamily. Requires heme b as cofactor. Ca(2+) is required as a cofactor.

Its subcellular location is the secreted. The catalysed reaction is 2 a phenolic donor + H2O2 = 2 a phenolic radical donor + 2 H2O. Its function is as follows. Removal of H(2)O(2), oxidation of toxic reductants, biosynthesis and degradation of lignin, suberization, auxin catabolism, response to environmental stresses such as wounding, pathogen attack and oxidative stress. These functions might be dependent on each isozyme/isoform in each plant tissue. The chain is Peroxidase 9 (PER9) from Arabidopsis thaliana (Mouse-ear cress).